A 349-amino-acid polypeptide reads, in one-letter code: tRNA-specific 2-thiouridylase MnmA (349 aa).

ATP is bound by residues 7-14 and Leu-33; that span reads GLSGGVDS. Cys-94 serves as the catalytic Nucleophile. The cysteines at positions 94 and 193 are disulfide-linked. Residue Gly-119 coordinates ATP. Residues 143–145 form an interaction with tRNA region; sequence KDQ. The Cysteine persulfide intermediate role is filled by Cys-193. Residues 298-299 form an interaction with tRNA region; it reads RY.

It belongs to the MnmA/TRMU family.

It is found in the cytoplasm. The enzyme catalyses S-sulfanyl-L-cysteinyl-[protein] + uridine(34) in tRNA + AH2 + ATP = 2-thiouridine(34) in tRNA + L-cysteinyl-[protein] + A + AMP + diphosphate + H(+). Its function is as follows. Catalyzes the 2-thiolation of uridine at the wobble position (U34) of tRNA, leading to the formation of s(2)U34. This chain is tRNA-specific 2-thiouridylase MnmA, found in Rippkaea orientalis (strain PCC 8801 / RF-1) (Cyanothece sp. (strain PCC 8801)).